The following is a 3948-amino-acid chain: Equisetin synthetase eqxS (3948 aa).

Positions 4–438 constitute a Ketosynthase family 3 (KS3) domain; sequence SEPIAVIGSA…GTNAHAIIEA (435 aa). Residues Cys177, His316, and His358 each act as for beta-ketoacyl synthase activity in the active site. A malonyl-CoA:ACP transacylase (MAT) domain region spans residues 543 to 847; it reads IFTGQGTQWP…DTIEAISEGR (305 aa). Residues 931–1066 are N-terminal hotdog fold; that stretch reads HPLLGRRCHD…AQIKASLGAP (136 aa). The interval 931–1233 is dehydratase (DH) domain; it reads HPLLGRRCHD…MELVPFSPAT (303 aa). The 305-residue stretch at 931–1235 folds into the PKS/mFAS DH domain; that stretch reads HPLLGRRCHD…LVPFSPATPA (305 aa). Residue His964 is the Proton acceptor; for dehydratase activity of the active site. Positions 1081–1235 are C-terminal hotdog fold; that stretch reads LRPVSVDRFY…LVPFSPATPA (155 aa). The active-site Proton donor; for dehydratase activity is Asp1141. The segment at 1376–1574 is methyltransferase (MT) domain; the sequence is MLQDVYEQGF…GIDTTTPPVH (199 aa). Residues 2105 to 2277 are ketoreductase (KR) domain; the sequence is TFLLVGLTGE…VAASSIDISS (173 aa). One can recognise a Carrier 1 domain in the interval 2389 to 2464; it reads AIIKESFIVR…DLVDECLDLL (76 aa). The residue at position 2424 (Ser2424) is an O-(pantetheine 4'-phosphoryl)serine. A disordered region spans residues 2480-2553; that stretch reads QAAKPTTVIP…NSTDILAPPR (74 aa). Polar residues-rich tracts occupy residues 2487 to 2505 and 2513 to 2528; these read VIPQ…QGTS and GSDS…LTSW. The span at 2529–2541 shows a compositional bias: basic and acidic residues; sequence DRQDSSPPDKSDD. A condensation (C) domain region spans residues 2564–2991; the sequence is SYGQAGFWFL…IRGSDKTVDA (428 aa). Residues 3026–3424 form an adenylation (A) (KR) domain region; sequence QVIQDNPDNI…DGLLFCDGRL (399 aa). One can recognise a Carrier 2 domain in the interval 3540–3617; the sequence is EILTPSEQRL…AMAGVLEDCG (78 aa). Ser3577 carries the post-translational modification O-(pantetheine 4'-phosphoryl)serine. The reductase (RED) domain stretch occupies residues 3653–3870; sequence LTGSSGYLGR…MPVNEVVEAI (218 aa).

This sequence in the C-terminal section; belongs to the NRP synthetase family.

It catalyses the reaction L-serine + 7 malonyl-CoA + acetyl-CoA + 2 S-adenosyl-L-methionine + ATP + 8 NADPH + 11 H(+) = (5S)-3-[(2E,6R,8E,10E,12E)-2,6-dimethyltetradeca-2,8,10,12-tetraenoyl]-5-(hydroxymethyl)pyrrolidine-2,4-dione + AMP + 2 S-adenosyl-L-homocysteine + 7 CO2 + diphosphate + 8 NADP(+) + 8 CoA + 6 H2O. The protein operates within mycotoxin biosynthesis. Hybrid PKS-NRPS synthetase; part of the gene cluster that mediates the biosynthesis of equisetin, a trans-fused decalin-containing tetramic acid with antimicrobial activity. The PKS module of eqxS together with the enoylreductase eqxC catalyze the formation of the polyketide unit which is then conjugated to L-serine by the condensation domain of the eqxS NRPS module. Activity of the Dieckmann cyclase domain (RED) results in release of the Dieckmann product intermediate. Diels-Alderase eqx3 is involved in endo-selective Diels-Alder cycloaddition to form the decalin ring, leading to the production of N-desmethylequisetin also called trichosetin. Subsequent N-methylation is carried out by eqxD to give equisetin. The polypeptide is Equisetin synthetase eqxS (Fusarium heterosporum).